Consider the following 242-residue polypeptide: Host range factor p28 (242 aa).

Residues 21–131 (YIDEPNDIRL…QSILRGLVNW (111 aa)) enclose the KilA-N domain. The RING-type zinc-finger motif lies at 173-226 (CGICYEVVYSKRLENDRYFGLLDSCNHIFCITCINIWHRTRRETGALDNCPICR).

The protein belongs to the orthopoxvirus OPG021 family.

The protein resides in the host cytoplasm. The catalysed reaction is S-ubiquitinyl-[E2 ubiquitin-conjugating enzyme]-L-cysteine + [acceptor protein]-L-lysine = [E2 ubiquitin-conjugating enzyme]-L-cysteine + N(6)-ubiquitinyl-[acceptor protein]-L-lysine.. Its function is as follows. RING-finger E3 ubiquitin ligase which catalyzes the formation of both 'Lys-48'- and 'Lys-63'-linked polyubiquitin chains. Plays an important role in virulence by acting as an anti-apoptotic factor. The chain is Host range factor p28 (OPG021) from Cynomys gunnisoni (Gunnison's prairie dog).